Reading from the N-terminus, the 328-residue chain is Nickel import system permease protein NikB (328 aa).

Helical transmembrane passes span 11-31 (LIQM…LMKL), 104-124 (LLIS…LGII), 139-159 (VIST…LLFI), 170-190 (ILSQ…AYII), 229-249 (ILPI…GTVV), and 279-299 (VLFI…LTLL). In terms of domain architecture, ABC transmembrane type-1 spans 100–297 (APITLLISFS…IINTIADLLT (198 aa)).

It belongs to the binding-protein-dependent transport system permease family. OppBC subfamily. In terms of assembly, the complex is composed of two ATP-binding proteins (NikD and NikE), two transmembrane proteins (NikB and NikC) and a solute-binding protein (NikA).

Its subcellular location is the cell membrane. Functionally, part of the ABC transporter complex NikABCDE (Opp2) involved in nickel import. Probably responsible for the translocation of the substrate across the membrane. The polypeptide is Nickel import system permease protein NikB (Staphylococcus aureus (strain MRSA252)).